A 509-amino-acid chain; its full sequence is 2-isopropylmalate synthase (509 aa).

The region spanning 5-267 (IQIFDTTLRD…QTALNLEETK (263 aa)) is the Pyruvate carboxyltransferase domain. The Mn(2+) site is built by aspartate 14, histidine 202, histidine 204, and asparagine 238. The segment at 391–509 (KLETLQLQYV…AAENVEKVGN (119 aa)) is regulatory domain.

It belongs to the alpha-IPM synthase/homocitrate synthase family. LeuA type 1 subfamily. As to quaternary structure, homodimer. It depends on Mn(2+) as a cofactor.

It is found in the cytoplasm. It catalyses the reaction 3-methyl-2-oxobutanoate + acetyl-CoA + H2O = (2S)-2-isopropylmalate + CoA + H(+). It participates in amino-acid biosynthesis; L-leucine biosynthesis; L-leucine from 3-methyl-2-oxobutanoate: step 1/4. In terms of biological role, catalyzes the condensation of the acetyl group of acetyl-CoA with 3-methyl-2-oxobutanoate (2-ketoisovalerate) to form 3-carboxy-3-hydroxy-4-methylpentanoate (2-isopropylmalate). The chain is 2-isopropylmalate synthase from Staphylococcus aureus (strain MW2).